A 51-amino-acid chain; its full sequence is Cyclic phosphodiesterase (51 aa).

Catalysis depends on His11, which acts as the Proton donor/acceptor. Thr13 contributes to the substrate binding site. His38 serves as the catalytic Proton donor/acceptor. The substrate site is built by Ser40 and Tyr43.

It belongs to the 2H phosphoesterase superfamily. CPD1 family.

Functionally, hydrolyzes ADP-ribose 1'',2''-cyclic phosphate (Appr&gt;1) that is produced during tRNA splicing into ADP-ribose 1''-phosphate (Appr-1''p). The sequence is that of Cyclic phosphodiesterase from Triticum aestivum (Wheat).